We begin with the raw amino-acid sequence, 151 residues long: Large ribosomal subunit protein uL15 (151 aa).

Positions 1–14 are enriched in basic residues; the sequence is MRREKKSRAYRGSR. A disordered region spans residues 1-33; the sequence is MRREKKSRAYRGSRTHGWGRVGQHRKSGSRGGR.

Belongs to the universal ribosomal protein uL15 family. Part of the 50S ribosomal subunit.

Functionally, binds to the 23S rRNA. The chain is Large ribosomal subunit protein uL15 from Thermofilum pendens (strain DSM 2475 / Hrk 5).